The primary structure comprises 314 residues: 4-hydroxy-3-methylbut-2-enyl diphosphate reductase (314 aa).

Cysteine 12 is a binding site for [4Fe-4S] cluster. Positions 43 and 81 each coordinate (2E)-4-hydroxy-3-methylbut-2-enyl diphosphate. Histidine 43 and histidine 81 together coordinate dimethylallyl diphosphate. Positions 43 and 81 each coordinate isopentenyl diphosphate. Residue cysteine 103 coordinates [4Fe-4S] cluster. Histidine 131 is a (2E)-4-hydroxy-3-methylbut-2-enyl diphosphate binding site. Histidine 131 contacts dimethylallyl diphosphate. Residue histidine 131 coordinates isopentenyl diphosphate. Glutamate 133 (proton donor) is an active-site residue. Threonine 170 lines the (2E)-4-hydroxy-3-methylbut-2-enyl diphosphate pocket. Cysteine 198 lines the [4Fe-4S] cluster pocket. Positions 226, 228, and 271 each coordinate (2E)-4-hydroxy-3-methylbut-2-enyl diphosphate. Residues serine 226, asparagine 228, and serine 271 each contribute to the dimethylallyl diphosphate site. Isopentenyl diphosphate is bound by residues serine 226, asparagine 228, and serine 271.

The protein belongs to the IspH family. Requires [4Fe-4S] cluster as cofactor.

The enzyme catalyses isopentenyl diphosphate + 2 oxidized [2Fe-2S]-[ferredoxin] + H2O = (2E)-4-hydroxy-3-methylbut-2-enyl diphosphate + 2 reduced [2Fe-2S]-[ferredoxin] + 2 H(+). It catalyses the reaction dimethylallyl diphosphate + 2 oxidized [2Fe-2S]-[ferredoxin] + H2O = (2E)-4-hydroxy-3-methylbut-2-enyl diphosphate + 2 reduced [2Fe-2S]-[ferredoxin] + 2 H(+). It participates in isoprenoid biosynthesis; dimethylallyl diphosphate biosynthesis; dimethylallyl diphosphate from (2E)-4-hydroxy-3-methylbutenyl diphosphate: step 1/1. Its pathway is isoprenoid biosynthesis; isopentenyl diphosphate biosynthesis via DXP pathway; isopentenyl diphosphate from 1-deoxy-D-xylulose 5-phosphate: step 6/6. Functionally, catalyzes the conversion of 1-hydroxy-2-methyl-2-(E)-butenyl 4-diphosphate (HMBPP) into a mixture of isopentenyl diphosphate (IPP) and dimethylallyl diphosphate (DMAPP). Acts in the terminal step of the DOXP/MEP pathway for isoprenoid precursor biosynthesis. The protein is 4-hydroxy-3-methylbut-2-enyl diphosphate reductase of Bacillus velezensis (strain DSM 23117 / BGSC 10A6 / LMG 26770 / FZB42) (Bacillus amyloliquefaciens subsp. plantarum).